The following is a 428-amino-acid chain: Flotillin-2a (428 aa).

Residues Cys-4, Cys-19, and Cys-20 are each lipidated (S-palmitoyl cysteine).

The protein belongs to the band 7/mec-2 family. Flotillin subfamily. As to quaternary structure, heterooligomer; Heterooligomerizes with ic complex of flotillins 1 and 2. Post-translationally, palmitoylation may be required for the formation of higher order complexes and for neurite outgrowth in cultured neural stem cells.

It localises to the membrane. Its subcellular location is the endosome. Its function is as follows. May play a role in axon growth and regeneration. May be involved in epidermal cell adhesion and epidermal structure and function. The chain is Flotillin-2a (flot2a) from Danio rerio (Zebrafish).